Here is a 172-residue protein sequence, read N- to C-terminus: NADH-ubiquinone oxidoreductase chain 6 (172 aa).

The next 5 membrane-spanning stretches (helical) occupy residues 1-21 (MTNY…GLAL), 26-48 (IYGG…GFGG), 52-74 (GLMV…TAMA), 86-106 (WFIF…FYLF), and 147-167 (CATW…FIII).

It belongs to the complex I subunit 6 family. Core subunit of respiratory chain NADH dehydrogenase (Complex I) which is composed of 45 different subunits.

It localises to the mitochondrion inner membrane. The enzyme catalyses a ubiquinone + NADH + 5 H(+)(in) = a ubiquinol + NAD(+) + 4 H(+)(out). Core subunit of the mitochondrial membrane respiratory chain NADH dehydrogenase (Complex I) which catalyzes electron transfer from NADH through the respiratory chain, using ubiquinone as an electron acceptor. Essential for the catalytic activity and assembly of complex I. The sequence is that of NADH-ubiquinone oxidoreductase chain 6 from Rattus norvegicus (Rat).